A 169-amino-acid polypeptide reads, in one-letter code: Peptide deformylase 1 (169 aa).

Fe cation is bound by residues C93 and H135. E136 is an active-site residue. H139 provides a ligand contact to Fe cation.

This sequence belongs to the polypeptide deformylase family. The cofactor is Fe(2+).

It carries out the reaction N-terminal N-formyl-L-methionyl-[peptide] + H2O = N-terminal L-methionyl-[peptide] + formate. Its function is as follows. Removes the formyl group from the N-terminal Met of newly synthesized proteins. Requires at least a dipeptide for an efficient rate of reaction. N-terminal L-methionine is a prerequisite for activity but the enzyme has broad specificity at other positions. The sequence is that of Peptide deformylase 1 from Corynebacterium glutamicum (strain ATCC 13032 / DSM 20300 / JCM 1318 / BCRC 11384 / CCUG 27702 / LMG 3730 / NBRC 12168 / NCIMB 10025 / NRRL B-2784 / 534).